Reading from the N-terminus, the 24-residue chain is Caerulein precursor fragment B4 (24 aa).

In terms of tissue distribution, expressed by the skin glands.

The protein localises to the secreted. Functionally, has antibacterial and antifungal activity. The sequence is that of Caerulein precursor fragment B4 from Xenopus borealis (Kenyan clawed frog).